A 699-amino-acid chain; its full sequence is MARKTPIERYRNIGIMAHIDAGKTTATERILFYTGISHKIGETHEGAAVMDWMSQEQERGITITSAATTAFWQGMDQQYPQHRINIIDTPGHVDFTIEVERSLRVLDGAIAVFCAVGGVEPQSETVWRQATKYEVPRMAFVNKMDRAGANFGRVVEQIRTRLKATPVPLQLPIGAEDEFKGVVDLVRMKAIYWNEEDMGVTYEQTDVPAELADEAAEAREFLVEAAAEADEELMDKYLEGGELTVEEINRGLRARTLANEIVPAFCGSAFKNKGVQALLDGVIEYLPSPVDVPAIEGELDDADGTVATRKPGDDQPFAALAFKIATDPYVGTLTFFRVYSGVVQTGDTVFNPVKGKKERLGRIVQMHANSREEIKEVRAGDIAAAVGLKDVTTGDTLCDINNKITLERMEFPDPVISVAVEPKTKGDQEKMGMALGKLAQEDPSFQVRTDEESGQTIISGMGELHLDIIVDRLKREFKVEANVGAPQVAYRETIRKTVEQEGKFVRQSGGRGQYGHVHLRISPQERNAGYEFVNSIVGGVVPKEYIPSVDKGAYEALENGILAGFPAIDVKVELYDGSYHDVDSSEAAFKIAGSMAMKEGFMKADPVLLEPIMRVEVVTPEEYMGDVMGDLNRRRGTVQGMEDGPSGKIIRAQVPLKEMFGYATDLRSATQGRASYVMFFDEYQEAPASIADEIIKKAS.

Residues 8 to 290 (ERYRNIGIMA…GVIEYLPSPV (283 aa)) form the tr-type G domain. GTP contacts are provided by residues 17-24 (AHIDAGKT), 88-92 (DTPGH), and 142-145 (NKMD).

This sequence belongs to the TRAFAC class translation factor GTPase superfamily. Classic translation factor GTPase family. EF-G/EF-2 subfamily.

Its subcellular location is the cytoplasm. Functionally, catalyzes the GTP-dependent ribosomal translocation step during translation elongation. During this step, the ribosome changes from the pre-translocational (PRE) to the post-translocational (POST) state as the newly formed A-site-bound peptidyl-tRNA and P-site-bound deacylated tRNA move to the P and E sites, respectively. Catalyzes the coordinated movement of the two tRNA molecules, the mRNA and conformational changes in the ribosome. The protein is Elongation factor G of Alkalilimnicola ehrlichii (strain ATCC BAA-1101 / DSM 17681 / MLHE-1).